A 90-amino-acid chain; its full sequence is MATKIRLKRMGAKKAPFYRLVVADSRSPRDGRVVEEIGYYNPVKQPVEIKVDEEKALHWLTTGAQPSETVRALLKKAGVWQKYIAAREAK.

The protein belongs to the bacterial ribosomal protein bS16 family.

The polypeptide is Small ribosomal subunit protein bS16 (Moorella thermoacetica (strain ATCC 39073 / JCM 9320)).